A 152-amino-acid chain; its full sequence is Ribosome maturation factor RimP (152 aa).

It belongs to the RimP family.

It localises to the cytoplasm. Functionally, required for maturation of 30S ribosomal subunits. The chain is Ribosome maturation factor RimP from Salmonella arizonae (strain ATCC BAA-731 / CDC346-86 / RSK2980).